The chain runs to 231 residues: Ureidoacrylate amidohydrolase RutB (231 aa).

Catalysis depends on Asp-25, which acts as the Proton acceptor. The active site involves Lys-134. Catalysis depends on Cys-167, which acts as the Nucleophile.

Belongs to the isochorismatase family. RutB subfamily.

The enzyme catalyses (Z)-3-ureidoacrylate + H2O + H(+) = (Z)-3-aminoacrylate + NH4(+) + CO2. It catalyses the reaction (Z)-3-ureidoacrylate + H2O = (Z)-3-aminoacrylate + carbamate + H(+). It carries out the reaction (Z)-2-methylureidoacrylate + H2O + H(+) = (Z)-2-methylaminoacrylate + NH4(+) + CO2. Its function is as follows. Hydrolyzes ureidoacrylate to form aminoacrylate and carbamate. The carbamate hydrolyzes spontaneously, thereby releasing one of the nitrogen atoms of the pyrimidine ring as ammonia and one of its carbon atoms as CO2. The polypeptide is Ureidoacrylate amidohydrolase RutB (Escherichia coli O18:K1:H7 (strain IHE3034 / ExPEC)).